The chain runs to 115 residues: NAD(P)H-quinone oxidoreductase subunit M (115 aa).

The protein belongs to the complex I NdhM subunit family. NDH-1 can be composed of about 15 different subunits; different subcomplexes with different compositions have been identified which probably have different functions.

It localises to the cellular thylakoid membrane. The catalysed reaction is a plastoquinone + NADH + (n+1) H(+)(in) = a plastoquinol + NAD(+) + n H(+)(out). It carries out the reaction a plastoquinone + NADPH + (n+1) H(+)(in) = a plastoquinol + NADP(+) + n H(+)(out). NDH-1 shuttles electrons from an unknown electron donor, via FMN and iron-sulfur (Fe-S) centers, to quinones in the respiratory and/or the photosynthetic chain. The immediate electron acceptor for the enzyme in this species is believed to be plastoquinone. Couples the redox reaction to proton translocation, and thus conserves the redox energy in a proton gradient. Cyanobacterial NDH-1 also plays a role in inorganic carbon-concentration. In Trichodesmium erythraeum (strain IMS101), this protein is NAD(P)H-quinone oxidoreductase subunit M.